We begin with the raw amino-acid sequence, 807 residues long: MLMPRRPRNPRTVRIRIRVRGVVQGVGFRPFVYRLARELGLAGWVRNDGAGVDIEAQGSAAALVELRERLRRDAPPLARVDEIGEERCAAQVDADGFAILESSRSDAAVHTAIGHDTAVCPDCLAELFDPANRRYRYAFINCTQCGPRYTLTWALPYDRATTSMAPFPQCRPCLDEYNAPEHRRFHAEPNACPDCGPSLALLNAQGMPVEDVDPIAETVARLQRGEIVAIKGLGGFHLACDAHNADAVARLRSRKQREEKPFAVMVANLATAAQWGDIGSGEAALLTASERPIVLLRKRSGVDGRFAGVAPGLVWLGVMLPYTPLQYLLFHEAAGRPEGLGWLAQPQSLVLVMTSANPGGEPLVTGNDEAAQRLTGIADAFLLHDREILVRCDDSVVRGDGEPAPHVQFIRRARGYTPRAIKLARSGPSVLALGGSFKNTVCLTRGDEAFVSQHVGDLGNAATCEALIEAVAHLQRVLEIRPQLVAHDLHPDFFSTRHAAELAAQWGVPAVAVQHHHAHIAAVLAEHGSDEPAIGLALDGVGLGDDGQAWGGELLLVDGGACKRLGHLRELPLPGGDRAAREPWRMAAAALHAMGRGEEIEGRFPRQPGAPMVNRMLAQRLNAPLSSSMGRWFDAAAGLLGTRETMAYEGQAAMLLEGLAESWGEQPSPGRPKTVAHSLGGVPRSGGGTYKALALPDAWRIDAGNTLDLLPLLEALSAETNAARGAAQFHATLVAALEAWTVATVQVTGVRTVVFGGGCFLNHILARNLCRRLAARGLTVLTARQLPPNDGGIALGQVWVALQRAPN.

The 88-residue stretch at 14-101 folds into the Acylphosphatase-like domain; the sequence is RIRIRVRGVV…VDADGFAILE (88 aa). 2 consecutive C4-type zinc fingers follow at residues 120–145 and 170–195; these read CPDCLAELFDPANRRYRYAFINCTQC and CRPCLDEYNAPEHRRFHAEPNACPDC. Residues 212-415 enclose the YrdC-like domain; the sequence is VDPIAETVAR…HVQFIRRARG (204 aa). Residues 663 to 682 are disordered; the sequence is WGEQPSPGRPKTVAHSLGGV.

This sequence belongs to the carbamoyltransferase HypF family.

It carries out the reaction C-terminal L-cysteinyl-[HypE protein] + carbamoyl phosphate + ATP + H2O = C-terminal S-carboxamide-L-cysteinyl-[HypE protein] + AMP + phosphate + diphosphate + H(+). The protein operates within protein modification; [NiFe] hydrogenase maturation. In terms of biological role, involved in the maturation of [NiFe] hydrogenases. Along with HypE, it catalyzes the synthesis of the CN ligands of the active site iron of [NiFe]-hydrogenases. HypF functions as a carbamoyl transferase using carbamoylphosphate as a substrate and transferring the carboxamido moiety in an ATP-dependent reaction to the thiolate of the C-terminal cysteine of HypE yielding a protein-S-carboxamide. This chain is Carbamoyltransferase HypF2 (hypF2), found in Cupriavidus necator (strain ATCC 17699 / DSM 428 / KCTC 22496 / NCIMB 10442 / H16 / Stanier 337) (Ralstonia eutropha).